The primary structure comprises 146 residues: D-aminoacyl-tRNA deacylase (146 aa).

The Gly-cisPro motif, important for rejection of L-amino acids signature appears at 137–138 (GP).

The protein belongs to the DTD family. Homodimer.

It is found in the cytoplasm. It catalyses the reaction glycyl-tRNA(Ala) + H2O = tRNA(Ala) + glycine + H(+). It carries out the reaction a D-aminoacyl-tRNA + H2O = a tRNA + a D-alpha-amino acid + H(+). In terms of biological role, an aminoacyl-tRNA editing enzyme that deacylates mischarged D-aminoacyl-tRNAs. Also deacylates mischarged glycyl-tRNA(Ala), protecting cells against glycine mischarging by AlaRS. Acts via tRNA-based rather than protein-based catalysis; rejects L-amino acids rather than detecting D-amino acids in the active site. By recycling D-aminoacyl-tRNA to D-amino acids and free tRNA molecules, this enzyme counteracts the toxicity associated with the formation of D-aminoacyl-tRNA entities in vivo and helps enforce protein L-homochirality. The polypeptide is D-aminoacyl-tRNA deacylase (Bacillus cereus (strain ATCC 14579 / DSM 31 / CCUG 7414 / JCM 2152 / NBRC 15305 / NCIMB 9373 / NCTC 2599 / NRRL B-3711)).